A 572-amino-acid polypeptide reads, in one-letter code: MSFKMDREEYAQHYGPTVGDSVRLGDTNLFAAIEKDFTVYGQESKFGGGKVLRDGMGVSATETRDNPSVVDTIITGATIIDYTGIIKADIGIRDGKIVAIGRGGNPDTMDNVDFVVGASTEAIAAEGLIVTAGGIDLHVHYISADLPEFGLDNGITTLFGGGTGPADGSNATTCTPGKFHITRMLQAVDDMPANFGFLAKGVGSETEVVEEQIKAGAAGIKTHEDWGATYAGIDNSLKVADKYDVSFAVHTDSLNEGGFMENTLESFQGRTVHTFHTEGSGGGHAPDIMVFAGKENILPSSTNPTNPYTTNAIGELLDMVMVCHHLDPKIPEDVSFAESRVRKQTVAAEDVLHDMGALSIMTSDAMAMGRVGEVAMRCWQLADKMKAQRGPLEGDSEFNDNNRIKRYVAKYTINPAITNGIADYIGSVEVGKFADLVIWEPAQFGAKPKLVLKGGMLTYGVMGDAGSSLPTPQPRIMRKLYGAYGQAVHETNLTFVSQYAYDHGIKEEIGLNKIVLPVKNTRNLTKRDMKLNDYAPKTIRIDPQTFDVFIDDELVTCEPIHTTSLSQRYFLF.

The 440-residue stretch at 133-572 (GGIDLHVHYI…TSLSQRYFLF (440 aa)) folds into the Urease domain. 3 residues coordinate Ni(2+): H138, H140, and K221. K221 is subject to N6-carboxylysine. A substrate-binding site is contributed by H223. The Ni(2+) site is built by H250 and H276. Residue H324 is the Proton donor of the active site. D364 is a Ni(2+) binding site.

Belongs to the metallo-dependent hydrolases superfamily. Urease alpha subunit family. In terms of assembly, heterotrimer of UreA (gamma), UreB (beta) and UreC (alpha) subunits. Three heterotrimers associate to form the active enzyme. Ni cation serves as cofactor. Carboxylation allows a single lysine to coordinate two nickel ions.

It localises to the cytoplasm. The catalysed reaction is urea + 2 H2O + H(+) = hydrogencarbonate + 2 NH4(+). It functions in the pathway nitrogen metabolism; urea degradation; CO(2) and NH(3) from urea (urease route): step 1/1. In terms of biological role, ureolysis may allow urea to be employed as a nitrogen source for growth and produces ammonia which may protect from killing at low pH. In Streptococcus salivarius (strain 57.I), this protein is Urease subunit alpha.